The primary structure comprises 125 residues: Small ribosomal subunit protein uS12 (125 aa).

Asp-89 carries the 3-methylthioaspartic acid modification.

The protein belongs to the universal ribosomal protein uS12 family. As to quaternary structure, part of the 30S ribosomal subunit. Contacts proteins S8 and S17. May interact with IF1 in the 30S initiation complex.

Functionally, with S4 and S5 plays an important role in translational accuracy. Its function is as follows. Interacts with and stabilizes bases of the 16S rRNA that are involved in tRNA selection in the A site and with the mRNA backbone. Located at the interface of the 30S and 50S subunits, it traverses the body of the 30S subunit contacting proteins on the other side and probably holding the rRNA structure together. The combined cluster of proteins S8, S12 and S17 appears to hold together the shoulder and platform of the 30S subunit. The protein is Small ribosomal subunit protein uS12 of Bordetella avium (strain 197N).